The following is a 291-amino-acid chain: Bis(5'-nucleosyl)-tetraphosphatase, symmetrical (291 aa).

Belongs to the Ap4A hydrolase family.

The catalysed reaction is P(1),P(4)-bis(5'-adenosyl) tetraphosphate + H2O = 2 ADP + 2 H(+). Its function is as follows. Hydrolyzes diadenosine 5',5'''-P1,P4-tetraphosphate to yield ADP. The polypeptide is Bis(5'-nucleosyl)-tetraphosphatase, symmetrical (Coxiella burnetii (strain RSA 331 / Henzerling II)).